A 785-amino-acid polypeptide reads, in one-letter code: Putative endonuclease MutS2 (785 aa).

Position 335-342 (335-342 (GPNTGGKT)) interacts with ATP. The stretch at 513 to 586 (TAEHNEVDTM…AEKVKAAMKE (74 aa)) forms a coiled coil. The tract at residues 636–785 (KRDFKPGDEV…GSGVTVVELK (150 aa)) is partially complements a deletion for mitomycin C (MMC) resistance and for chromosomal DNA transformation. Residues 641 to 681 (PGDEVKVLTFGQKGTLLEKTGGNEWNVQIGILKMKVKEKDL) form a KOW region region. The 76-residue stretch at 710–785 (LDLRGERYEN…GSGVTVVELK (76 aa)) folds into the Smr domain.

Belongs to the DNA mismatch repair MutS family. MutS2 subfamily. Binds to ribosomes as a homodimer. Binds to stalled/collided disomes, association is greater in (ribosome-targeted) antibiotic-treated cells (with increased stalling at specific mRNA sites). The clamp domain of one monomer binds the A-site finger, the 23S rRNA of the central protuberance and ribosomal protein uL5 of the leading (stalled) ribosome, while the other monomer binds in a gap between the ribosomal central protuberance and the L1 stalk of the leading ribosome.

The protein resides in the cytoplasm. Functionally, acts as a ribosome collision sensor splitting the ribosome into its 2 subunits. Detects stalled/collided disomes (pairs of ribosomes where the leading ribosome is stalled and a second ribosome has collided with it) which it binds and splits, by an ATP-hydrolysis driven conformational change. Does not seem to have endoribonuclease activity (in the context of ribosome stalling). Acts upstream of the ribosome quality control system (RQC), a ribosome-associated complex that mediates the extraction of incompletely synthesized nascent chains from stalled ribosomes and their subsequent degradation, probably generates substrates for RQC. In terms of biological role, does not seem to be involved in mismatch repair or in the prevention of interspecific recombination during DNA transformation. Might be involved in homologous recombination. Putative endonuclease that may be involved in the suppression of homologous recombination and may therefore have a key role in the control of bacterial genetic diversity. The chain is Putative endonuclease MutS2 from Bacillus subtilis (strain 168).